We begin with the raw amino-acid sequence, 137 residues long: Small ribosomal subunit protein uS12 (137 aa).

Positions 1 to 44 are disordered; it reads MPTINQLVRKGRKSRTSKSDAPALNFGYNSMKKKATDNPAPQKR. D102 carries the post-translational modification 3-methylthioaspartic acid.

This sequence belongs to the universal ribosomal protein uS12 family. As to quaternary structure, part of the 30S ribosomal subunit. Contacts proteins S8 and S17. May interact with IF1 in the 30S initiation complex.

Functionally, with S4 and S5 plays an important role in translational accuracy. Interacts with and stabilizes bases of the 16S rRNA that are involved in tRNA selection in the A site and with the mRNA backbone. Located at the interface of the 30S and 50S subunits, it traverses the body of the 30S subunit contacting proteins on the other side and probably holding the rRNA structure together. The combined cluster of proteins S8, S12 and S17 appears to hold together the shoulder and platform of the 30S subunit. This is Small ribosomal subunit protein uS12 from Latilactobacillus sakei subsp. sakei (strain 23K) (Lactobacillus sakei subsp. sakei).